The sequence spans 118 residues: Mitochondrial import inner membrane translocase subunit Tim10 B (118 aa).

The Twin CX3C motif motif lies at 31 to 55 (CFQRCVPSLHHRALDAEEEACLHSC). 2 disulfide bridges follow: Cys31–Cys55 and Cys35–Cys51. A disordered region spans residues 89-118 (SAVPHATAEQLETSPSRSLPSGNLGKGGAG). Residues 98 to 109 (QLETSPSRSLPS) show a composition bias toward polar residues.

This sequence belongs to the small Tim family. Component of the TIM22 complex, which core is composed of TIMM22, associated with TIMM10 (TIMM10A and/or TIMM10B), TIMM9, AGK and TIMM29.

It localises to the mitochondrion inner membrane. Component of the TIM22 complex, a complex that mediates the import and insertion of multi-pass transmembrane proteins into the mitochondrial inner membrane. The TIM22 complex forms a twin-pore translocase that uses the membrane potential as the external driving force. In the TIM22 complex, it may act as a docking point for the soluble 70 kDa complex that guides the target proteins in transit through the aqueous mitochondrial intermembrane space. In Bos taurus (Bovine), this protein is Mitochondrial import inner membrane translocase subunit Tim10 B (TIMM10B).